The primary structure comprises 132 residues: Small ribosomal subunit protein uS8 (132 aa).

The protein belongs to the universal ribosomal protein uS8 family. In terms of assembly, part of the 30S ribosomal subunit. Contacts proteins S5 and S12.

Its function is as follows. One of the primary rRNA binding proteins, it binds directly to 16S rRNA central domain where it helps coordinate assembly of the platform of the 30S subunit. The chain is Small ribosomal subunit protein uS8 from Francisella philomiragia subsp. philomiragia (strain ATCC 25017 / CCUG 19701 / FSC 153 / O#319-036).